The following is a 316-amino-acid chain: tRNA dimethylallyltransferase (316 aa).

14–21 contributes to the ATP binding site; it reads GPTAVGKT. Residue 16–21 coordinates substrate; sequence TAVGKT. The interaction with substrate tRNA stretch occupies residues 39–42; the sequence is DSMQ.

The protein belongs to the IPP transferase family. Monomer. Requires Mg(2+) as cofactor.

It carries out the reaction adenosine(37) in tRNA + dimethylallyl diphosphate = N(6)-dimethylallyladenosine(37) in tRNA + diphosphate. Its function is as follows. Catalyzes the transfer of a dimethylallyl group onto the adenine at position 37 in tRNAs that read codons beginning with uridine, leading to the formation of N6-(dimethylallyl)adenosine (i(6)A). The polypeptide is tRNA dimethylallyltransferase (Bacillus cytotoxicus (strain DSM 22905 / CIP 110041 / 391-98 / NVH 391-98)).